The following is a 588-amino-acid chain: Zeta-carotene desaturase, chloroplastic/chromoplastic (588 aa).

The N-terminal 49 residues, 1–49, are a transit peptide targeting the chloroplast and chromoplast; that stretch reads MATCSAYLCCPATSASLKKRVFPDGSAGFLFFGGRRLSNRLVTPKSVIR.

This sequence belongs to the zeta carotene desaturase family. Monomer and dimer. The cofactor is decylplastoquinone. 6-decylubiquinone is required as a cofactor.

The protein resides in the plastid. Its subcellular location is the chloroplast. It is found in the chromoplast. The enzyme catalyses 9,9'-di-cis-zeta-carotene + 2 a quinone = 7,7',9,9'-tetra-cis-lycopene + 2 a quinol. The protein operates within carotenoid biosynthesis; lycopene biosynthesis. Catalyzes the conversion of zeta-carotene to lycopene via the intermediary of neurosporene. It carries out two consecutive desaturations (introduction of double bonds) at positions C-7 and C-7'. Shows stereoselectivity toward trans C15-C15'zeta-carotene double bond. The zeta-carotene produced by the phytoene desaturase PDS has a C15-C15' double bond in the cis configuration and it requires isomerization before being recognized as substrate by ZDS. No activity with all-trans-zeta-carotene. The main product is 7,9,7',9'-tetra-cis-lycopene (pro-lycopene). This chain is Zeta-carotene desaturase, chloroplastic/chromoplastic (ZDS), found in Capsicum annuum (Capsicum pepper).